The primary structure comprises 47 residues: uncharacterized protein (47 aa).

This is an uncharacterized protein from Treponema pallidum (strain Nichols).